A 486-amino-acid polypeptide reads, in one-letter code: CUGBP Elav-like family member 5 (486 aa).

Residues 1–11 (MARLTEREARR) are compositionally biased toward basic and acidic residues. The interval 1 to 39 (MARLTEREARRQQQQHPPQQQQPRACPMSGPEPPAQQSD) is disordered. Over residues 12-24 (QQQQHPPQQQQPR) the composition is skewed to low complexity. 3 consecutive RRM domains span residues 47–128 (IKLF…PADS), 135–215 (RKLF…FADT), and 401–479 (CNLF…LKRP).

It belongs to the CELF/BRUNOL family.

It is found in the nucleus. The protein resides in the cytoplasm. Functionally, RNA-binding protein that may be implicated in the regulation of pre-mRNA alternative splicing. The chain is CUGBP Elav-like family member 5 (celf5) from Xenopus tropicalis (Western clawed frog).